Consider the following 300-residue polypeptide: Hairy/enhancer-of-split related with YRPW motif protein 1 (300 aa).

The disordered stretch occupies residues 1 to 52 (MKRGHDYSSSDSELDENIEVEKESADENGNLSSAAGSMSPSTSSQILARKRR). Low complexity predominate over residues 32-44 (SSAAGSMSPSTSS). A bHLH domain is found at 48–103 (ARKRRRGIIEKRRRDRINNSLSELRRLVPSAFEKQGSAKLEKAEILQMTVDHLKML). An Orange domain is found at 121-157 (YRSLGFRECLAEVARYLSIIEGMDTTDPLRVRLVSHL). Low complexity predominate over residues 199–210 (AHTSANSTSSST). 2 disordered regions span residues 199-232 (AHTS…LRVP) and 278-300 (LSPT…IGAF). The YRPW motif signature appears at 290–293 (YRPW).

This sequence belongs to the HEY family. In terms of assembly, efficient DNA binding requires dimerization with another bHLH protein. Binds DNA in the form of homodimer or more strongly as a heterodimer with hes1/hairy1 or hes4/hairy2b. Also weakly interacts with the bHLH proteins hes2, neurod1 and neurod4/ath3. Interacts (via Orange domain) with ccdc89/boip (via C-terminus).

The protein localises to the nucleus. Functionally, downstream effector of Notch signaling. Transcriptional repressor which binds preferentially to the canonical E box sequence 5'-CACGTG-3'. Acts as a suppressor of neurogenesis by antagonizing proneural gene function. Functions during floorplate development. Plays a role in pronephros formation in the inhibition of distal tubule and duct cell fates and the promotion of glomus and proximal tubule formation. This is Hairy/enhancer-of-split related with YRPW motif protein 1 (hey1) from Xenopus tropicalis (Western clawed frog).